A 450-amino-acid chain; its full sequence is Dol-P-Glc:Glc(2)Man(9)GlcNAc(2)-PP-Dol alpha-1,2-glucosyltransferase (450 aa).

A helical transmembrane segment spans residues 12–32; the sequence is ISIISKYVAIVIFLIFVIIMF. N-linked (GlcNAc...) asparagine glycosylation occurs at N34. Transmembrane regions (helical) follow at residues 158–178, 190–210, 243–263, and 273–293; these read YFLF…LGLI, ALVG…IAFI, LLGY…NGGI, and IELH…FTIP. N297 is a glycosylation site (N-linked (GlcNAc...) asparagine). 4 consecutive transmembrane segments (helical) span residues 312-332, 357-377, 384-404, and 429-449; these read IILN…FTIV, LKPL…SSLI, FIGI…SPLF, and FIWL…KGII.

This sequence belongs to the ALG10 glucosyltransferase family.

The protein localises to the endoplasmic reticulum membrane. It carries out the reaction an alpha-D-Glc-(1-&gt;3)-alpha-D-Glc-(1-&gt;3)-alpha-D-Man-(1-&gt;2)-alpha-D-Man-(1-&gt;2)-alpha-D-Man-(1-&gt;3)-[alpha-D-Man-(1-&gt;2)-alpha-D-Man-(1-&gt;3)-[alpha-D-Man-(1-&gt;2)-alpha-D-Man-(1-&gt;6)]-alpha-D-Man-(1-&gt;6)]-beta-D-Man-(1-&gt;4)-beta-D-GlcNAc-(1-&gt;4)-alpha-D-GlcNAc-diphospho-di-trans,poly-cis-dolichol + a di-trans,poly-cis-dolichyl beta-D-glucosyl phosphate = a alpha-D-Glc-(1-&gt;2)-alpha-D-Glc-(1-&gt;3)-alpha-D-Glc-(1-&gt;3)-alpha-D-Man-(1-&gt;2)-alpha-D-Man-(1-&gt;2)-alpha-D-Man-(1-&gt;3)-[alpha-D-Man-(1-&gt;2)-alpha-D-Man-(1-&gt;3)-[alpha-D-Man-(1-&gt;2)-alpha-D-Man-(1-&gt;6)]-alpha-D-Man-(1-&gt;6)]-beta-D-Man-(1-&gt;4)-beta-D-GlcNAc-(1-&gt;4)-alpha-D-GlcNAc-diphospho-di-trans,poly-cis-dolichol + a di-trans,poly-cis-dolichyl phosphate + H(+). Its pathway is protein modification; protein glycosylation. Functionally, dol-P-Glc:Glc(2)Man(9)GlcNAc(2)-PP-Dol alpha-1,2-glucosyltransferase that operates in the biosynthetic pathway of dolichol-linked oligosaccharides, the glycan precursors employed in protein asparagine (N)-glycosylation. The assembly of dolichol-linked oligosaccharides begins on the cytosolic side of the endoplasmic reticulum membrane and finishes in its lumen. The sequential addition of sugars to dolichol pyrophosphate produces dolichol-linked oligosaccharides containing fourteen sugars, including two GlcNAcs, nine mannoses and three glucoses. Once assembled, the oligosaccharide is transferred from the lipid to nascent proteins by oligosaccharyltransferases. In the lumen of the endoplasmic reticulum, adds the third and last glucose residue from dolichyl phosphate glucose (Dol-P-Glc) onto the lipid-linked oligosaccharide intermediate Glc(2)Man(9)GlcNAc(2)-PP-Dol to produce Glc(3)Man(9)GlcNAc(2)-PP-Dol. This chain is Dol-P-Glc:Glc(2)Man(9)GlcNAc(2)-PP-Dol alpha-1,2-glucosyltransferase (DIE2), found in Candida albicans (strain SC5314 / ATCC MYA-2876) (Yeast).